The following is a 1087-amino-acid chain: Exportin-7-B (1087 aa).

The Importin N-terminal domain occupies 30–96 (AEKALVEFTN…RNYVLTYLAT (67 aa)).

The protein belongs to the exportin family.

Its subcellular location is the cytoplasm. It is found in the nucleus. Its function is as follows. Mediates the nuclear export of proteins (cargos) with broad substrate specificity. This Xenopus laevis (African clawed frog) protein is Exportin-7-B (xpo7-b).